We begin with the raw amino-acid sequence, 236 residues long: Auxin-responsive protein IAA13 (236 aa).

3 disordered regions span residues 1-24 (MAGA…GGAA), 52-93 (EAAA…WPPV), and 105-130 (SVKS…GSNS). The short motif at 12–16 (LRLGL) is the EAR-like (transcriptional repression) element. The segment covering 52-61 (EAAAGKAEAP) has biased composition (low complexity). Over residues 62–81 (AAEKAKRPAEAAAADAEKPP) the composition is skewed to basic and acidic residues. Residues 117–130 (QQQQPAANASGSNS) show a composition bias toward low complexity. Residues 131 to 218 (SAFVKVSMDG…SCKRLRIMKG (88 aa)) form the PB1 domain.

It belongs to the Aux/IAA family. In terms of assembly, homodimers and heterodimers.

The protein localises to the nucleus. In terms of biological role, aux/IAA proteins are short-lived transcriptional factors that function as repressors of early auxin response genes at low auxin concentrations. This chain is Auxin-responsive protein IAA13 (IAA13), found in Oryza sativa subsp. japonica (Rice).